The chain runs to 47 residues: Capistruin (47 aa).

The propeptide occupies 1-28; the sequence is MVRLLAKLLRSTIHGSNGVSLDAVSSTH. A cross-link (isoaspartyl glycine isopeptide (Gly-Asp)) is located at residues 29-37; sequence GTPGFQTPD.

In terms of processing, it is assumed that the two processing enzymes CapB/CapC convert the precursor protein CapA into the mature lasso peptide capistruin. CapB is assumed to cleave the precursor protein CapA and to set an N-terminal Gly free, whose a-NH2 group acts as the nucleophile in the subsequent cyclization reaction. CapC is most likely involved in the side-chain carboxyl group activation of aspartic acid at position 9 generating the electrophile for the condensation reaction. CapD may export capistruin outside of the producing cells.

Its subcellular location is the secreted. Functionally, peptide antibiotic that functions through inhibition of the bacterial DNA-dependent RNA polymerase (RNAP). Inhibits transcription by binding in RNAP secondary channel, where it sterically blocks the folding of the trigger loop, which is essential for efficient catalysis. In contrast to MccJ25, does not restrict access of nucleotide substrates to the catalytic center and shows a non-competitive mode of inhibition. Shows activity against closely related Gram-negative Burkholderia and Pseudomonas strains. Is not active against Gram-positive bacteria. The protein is Capistruin of Burkholderia thailandensis (strain ATCC 700388 / DSM 13276 / CCUG 48851 / CIP 106301 / E264).